A 132-amino-acid polypeptide reads, in one-letter code: uncharacterized protein (132 aa).

This is an uncharacterized protein from Caenorhabditis elegans.